The sequence spans 115 residues: Large ribosomal subunit protein bL20 (115 aa).

It belongs to the bacterial ribosomal protein bL20 family.

Its function is as follows. Binds directly to 23S ribosomal RNA and is necessary for the in vitro assembly process of the 50S ribosomal subunit. It is not involved in the protein synthesizing functions of that subunit. In Prochlorococcus marinus (strain NATL2A), this protein is Large ribosomal subunit protein bL20.